The following is a 182-amino-acid chain: Lipid A acyltransferase PagP (182 aa).

Residues 1-21 form the signal peptide; it reads MTQYFRSLAFFLLPVPATAMA. Cys-22 is lipidated: N-palmitoyl cysteine. Cys-22 is lipidated: S-diacylglycerol cysteine. Active-site residues include His-55, Asp-98, and Ser-99.

This sequence belongs to the lipid A palmitoyltransferase family. In terms of assembly, homodimer.

The protein localises to the cell outer membrane. It catalyses the reaction a lipid A + a 1,2-diacyl-sn-glycero-3-phosphocholine = a hepta-acyl lipid A + a 2-acyl-sn-glycero-3-phosphocholine. It carries out the reaction a lipid IVA + a 1,2-diacyl-sn-glycero-3-phosphocholine = a lipid IVB + a 2-acyl-sn-glycero-3-phosphocholine. The enzyme catalyses a lipid IIA + a 1,2-diacyl-sn-glycero-3-phosphocholine = a lipid IIB + a 2-acyl-sn-glycero-3-phosphocholine. Its function is as follows. Transfers a fatty acid residue from the sn-1 position of a phospholipid to the N-linked hydroxyfatty acid chain on the proximal unit of lipid A or its precursors. This Bordetella pertussis (strain CS) protein is Lipid A acyltransferase PagP.